Reading from the N-terminus, the 1017-residue chain is Centriole and centriolar satellite protein OFD1 (1017 aa).

The LisH domain maps to 69–101 (LIGASNSLVADHLQRCGYEYSLSVFFPESGLAK). 2 coiled-coil regions span residues 188–557 (PHRS…ENEV) and 626–659 (EFIA…RATQ). The mediates homooligomerization stretch occupies residues 609–666 (PPYVNTATEASSPESDFEFIASSTKAKVRELEQEAERLEKAFRTYYQRATQNPSTSPQ). Disordered regions lie at residues 657-676 (ATQN…SVNS), 685-705 (SSSM…QPLG), 721-749 (GSVV…RSLD), and 769-801 (LDRV…SFSG). 8 positions are modified to phosphoserine: Ser664, Ser670, Ser687, Ser722, Ser737, Ser747, Ser791, and Ser823. Over residues 722 to 740 (SVVSRPRRTSSSTRLSSTP) the composition is skewed to low complexity. Residues 895–966 (ELHMKERRQR…AHCENTLEKY (72 aa)) are a coiled coil. Basic and acidic residues predominate over residues 897 to 988 (HMKERRQREE…ADKSSKKSGK (92 aa)). The tract at residues 897 to 1017 (HMKERRQREE…FSHEEPDDMW (121 aa)) is disordered.

This sequence belongs to the OFD1 family. Homooligomer. Interacts with LCA5. Interacts with RUVBL1; the interaction is direct and may mediate interaction with the NuA4 histone acetyltransferase complex. Interacts with SDCCAG8; the interaction is direct. Interacts with MAP1LC3B. Interacts with C2CD3; OFD1 may act as a negative regulator of C2CD3. Forms a complex with KIAA0753/OFIP and CEP20/FOR20; the interaction with CEP20 is detected only in the presence of KIAA0753. Interacts with PCM1; this interaction may be mediated by KIAA0753/OFIP. Interacts with TBC1D31; regulates OFD1 activity in cilium assembly. Post-translationally, phosphorylated. Phosphorylation at Ser-737, by the cAMP-dependent protein kinase PKA, triggers ubiquitination and proteasomal degradation of OFD1. Also increases its interaction with TBC1D31 and regulates its function in ciliogenesis. Ubiquitinated by PJA2, upon phosphorylation at Ser-737 by PKA, leads to the proteasomal degradation of OFD1.

The protein resides in the cytoplasm. It localises to the cytoskeleton. It is found in the microtubule organizing center. Its subcellular location is the centrosome. The protein localises to the centriole. The protein resides in the centriolar satellite. It localises to the cilium basal body. It is found in the nucleus. Functionally, component of the centrioles controlling mother and daughter centrioles length. Recruits to the centriole IFT88 and centriole distal appendage-specific proteins including CEP164. Involved in the biogenesis of the cilium, a centriole-associated function. The cilium is a cell surface projection found in many vertebrate cells required to transduce signals important for development and tissue homeostasis. Plays an important role in development by regulating Wnt signaling and the specification of the left-right axis. Only OFD1 localized at the centriolar satellites is removed by autophagy, which is an important step in the ciliogenesis regulation. The chain is Centriole and centriolar satellite protein OFD1 (Ofd1) from Mus musculus (Mouse).